We begin with the raw amino-acid sequence, 106 residues long: Large ribosomal subunit protein eL42 (106 aa).

Belongs to the eukaryotic ribosomal protein eL42 family.

This is Large ribosomal subunit protein eL42 (RPL44) from Cyberlindnera jadinii (Torula yeast).